The sequence spans 939 residues: Vacuolar membrane protease (939 aa).

Over 1–11 the chain is Cytoplasmic; that stretch reads MGFNSIFKFRK. A helical transmembrane segment spans residues 12–32; sequence TSLSLLLFAVYFIIGILYFID. The Vacuolar portion of the chain corresponds to 33–356; that stretch reads KTRYKHSLPI…TFVAIPSTKL (324 aa). N-linked (GlcNAc...) asparagine glycans are attached at residues N59, N88, and N114. The Zn(2+) site is built by H149 and D161. The active-site Proton acceptor is the E193. E194, E219, and H293 together coordinate Zn(2+). N326 carries N-linked (GlcNAc...) asparagine glycosylation. The helical transmembrane segment at 357 to 377 threads the bilayer; the sequence is FWINIALLIIMPIISIFLFSI. Residues 378–388 lie on the Cytoplasmic side of the membrane; sequence VKKYNNEIIDS. Residues 389 to 409 form a helical membrane-spanning segment; that stretch reads GNIWWRLPISAMSSGTIIIFT. Residues 410-424 are Vacuolar-facing; that stretch reads TKLIMKWNPYILSRN. Residues 425-445 form a helical membrane-spanning segment; that stretch reads FLLPLIGLTFEFIILNSYILT. At 446–453 the chain is on the cytoplasmic side; that stretch reads MFENLSSS. The helical transmembrane segment at 454-474 threads the bilayer; that stretch reads FDFKTIAINEISFLFWIVLAY. At 475–491 the chain is on the vacuolar side; the sequence is QTWKLYDNNYQNTGIYP. The helical transmembrane segment at 492–512 threads the bilayer; sequence FTICYIVMATAGNIGYLFLIF. Topologically, residues 513 to 588 are cytoplasmic; that stretch reads KNIEIVEDEE…NQRTILKESK (76 aa). Over residues 540–552 the composition is skewed to basic and acidic residues; that stretch reads YRDEINGRDDSSR. Positions 540-561 are disordered; that stretch reads YRDEINGRDDSSRDSNSASIPT. A helical membrane pass occupies residues 589 to 609; that stretch reads LVYNYDWIIEFLLVVPFSTFL. The Vacuolar segment spans residues 610–636; that stretch reads LYNSLELIMDAVNQTIQETGDLYKVYK. N-linked (GlcNAc...) asparagine glycosylation occurs at N622. Residues 637 to 657 form a helical membrane-spanning segment; it reads ILAIGSILISIPTLPFAYKIG. The Cytoplasmic segment spans residues 658–663; sequence CQLGKT. A helical membrane pass occupies residues 664-684; sequence LTFISIGCLLISMALAPFTEM. Residues 685–939 are Vacuolar-facing; sequence NPIKFRFMQV…LVKLTEAMVL (255 aa). N-linked (GlcNAc...) asparagine glycosylation is found at N810 and N820.

It belongs to the peptidase M28 family. The cofactor is Zn(2+).

Its subcellular location is the vacuole membrane. Functionally, may be involved in vacuolar sorting and osmoregulation. This chain is Vacuolar membrane protease, found in Vanderwaltozyma polyspora (strain ATCC 22028 / DSM 70294 / BCRC 21397 / CBS 2163 / NBRC 10782 / NRRL Y-8283 / UCD 57-17) (Kluyveromyces polysporus).